A 387-amino-acid chain; its full sequence is tRNA N6-adenosine threonylcarbamoyltransferase (387 aa).

Positions 112 and 116 each coordinate Fe cation. Residues 134 to 138 (LASGG), D167, G180, and N325 contribute to the substrate site. Fe cation is bound at residue D353.

This sequence belongs to the KAE1 / TsaD family. Requires Fe(2+) as cofactor.

Its subcellular location is the cytoplasm. The catalysed reaction is L-threonylcarbamoyladenylate + adenosine(37) in tRNA = N(6)-L-threonylcarbamoyladenosine(37) in tRNA + AMP + H(+). Functionally, required for the formation of a threonylcarbamoyl group on adenosine at position 37 (t(6)A37) in tRNAs that read codons beginning with adenine. Is involved in the transfer of the threonylcarbamoyl moiety of threonylcarbamoyl-AMP (TC-AMP) to the N6 group of A37, together with TsaE and TsaB. TsaD likely plays a direct catalytic role in this reaction. The polypeptide is tRNA N6-adenosine threonylcarbamoyltransferase (Rickettsia prowazekii (strain Madrid E)).